The following is a 1309-amino-acid chain: MAASFCGSRRYDVFPSFSKVDVRRSFLAHLLKELDRRLINTFTDHGMERNLPIDAELLSAIAESRISIVIFSKNYASSTWCLDELVEIHTCYKELAQIVVPVFFNVHPSQVKKQTGEFGKVFGKTCKGKPENRKLRWMQALAAVANIAGYDLQNWPDEAVMIEMVADDVSKKLFKSSNDFSDIVGIEAHLEAMSSILRLKSEKARMVGISGPSGIGKTTIAKALFSKLSPQFHLRAFVTYKRTNQDDYDMKLCWIEKFLSEILGQKDLKVLDLGAVEQSLMHKKVLIILDDVDDLELLKTLVGQTGWFGFGSRIVVITQDRQLLKAHDINLIYEVAFPSAHLALEIFCQSAFGKIYPPSDFRELSVEFAYLAGNLPLDLRVLGLAMKGKHREEWIEMLPRLRNDLDGKFKKTLRNYLPVIRKRVSNEEGGREKLKKGNKKLDLDEEFPGGEIYSDEIPSPTSNWKDTDDFDSGDIIPIIADKSTTIIPNRRHSNDDWCSFCEFLRNRIPPLNPFKCSANDVIDFLRTRQVLGSTEALVDRLIFSSEAFGIKPEENPFRSQAVTSYLKAARDMTREKECILVFSCHDNLDVDETSFIEAISKELHKQGFIPLTYNLLGRENLDEEMLYGSRVGIMILSSSYVSSRQSLDHLVAVMEHWKTTDLVIIPIYFKVRLSDICGLKGRFEAAFLQLHMSLQEDRVQKWKAAMSEIVSIGGHEWTKGSQFILAEEVVRNASLRLYLKSSKNLLGILALLNHSQSTDVEIMGIWGIAGIGKTSIAREIFELHAPHYDFCYFLQDFHLMCQMKRPRQLREDFISKLFGEEKGLGASDVKPSFMRDWFHKKTILLVLDDVSNARDAEAVIGGFGWFSHGHRIILTSRSKQVLVQCKVKKPYEIQKLSDFESFRLCKQYLDGENPVISELISCSSGIPLALKLLVSSVSKQYITNMKDHLQSLRKDPPTQIQEAFRRSFDGLDENEKNIFLDLACFFRGQSKDYAVLLLDACGFFTYMGICELIDESLISLVDNKIEMPIPFQDMGRIIVHEEDEDPCERSRLWDSKDIVDVLTNNSGTEAIEGIFLDASDLTCELSPTVFGKMYNLRLLKFYCSTSGNQCKLTLPHGLDTLPDELSLLHWENYPLVYLPQKFNPVNLVELNMPYSNMEKLWEGKKNLEKLKNIKLSHSRELTDILMLSEALNLEHIDLEGCTSLIDVSMSIPCCGKLVSLNMKDCSRLRSLPSMVDLTTLKLLNLSGCSEFEDIQDFAPNLEEIYLAGTSIRELPLSIRNLTELVTLDLENCERLQEMPSLPVEIIRRT.

The TIR 1 domain occupies 9–173 (RRYDVFPSFS…MVADDVSKKL (165 aa)). The active site involves E84. The region spanning 187–418 (EAHLEAMSSI…FKKTLRNYLP (232 aa)) is the NB-ARC 1 domain. In terms of domain architecture, ALOG spans 488–585 (PNRRHSNDDW…KECILVFSCH (98 aa)). A TIR 2 domain is found at 574 to 737 (REKECILVFS…EVVRNASLRL (164 aa)). Positions 755-987 (SQSTDVEIMG…IFLDLACFFR (233 aa)) constitute an NB-ARC 2 domain. Residues 1114–1141 (LPHGLDTLPDELSLLHWENYPLVYLPQK) are a coiled coil. 6 LRR repeats span residues 1145–1167 (VNLV…KKNL), 1168–1195 (EKLK…NLEH), 1214–1237 (CGKL…MVDL), 1238–1258 (TTLK…QDFA), 1259–1283 (PNLE…NLTE), and 1285–1307 (VTLD…EIIR).

This sequence belongs to the disease resistance TIR-NB-LRR family.

The catalysed reaction is NAD(+) + H2O = ADP-D-ribose + nicotinamide + H(+). In terms of biological role, disease resistance protein that cooperates with RPP2B to confer resistance to Hyaloperonospora parasitica isolate Cala2. The polypeptide is Disease resistance protein RPP2A (Arabidopsis thaliana (Mouse-ear cress)).